Consider the following 1211-residue polypeptide: RNA helicase Mov10l1 (1211 aa).

Disordered regions lie at residues lysine 340–glycine 385 and tryptophan 674–aspartate 710. 2 stretches are compositionally biased toward polar residues: residues aspartate 345–glycine 372 and tryptophan 674–serine 688. The segment covering threonine 694–aspartate 710 has biased composition (basic and acidic residues). Residue glycine 770–threonine 777 participates in ATP binding. The short motif at aspartate 886 to glycine 889 is the DEAG box element. Positions aspartate 1192 to serine 1211 are disordered.

The protein belongs to the DNA2/NAM7 helicase family. SDE3 subfamily. In terms of assembly, interacts with PIWIL1. Interacts with PIWIL2. Interacts with PIWIL4. Interacts with HSPA2. Interacts with PLD6. As to expression, specifically expressed in testis.

It is found in the cytoplasm. It carries out the reaction ATP + H2O = ADP + phosphate + H(+). ATP-dependent RNA helicase required during spermatogenesis to repress transposable elements and prevent their mobilization, which is essential for germline integrity. Acts via the piRNA metabolic process, which mediates the repression of transposable elements during meiosis by forming complexes composed of piRNAs and Piwi proteins and governs the methylation and subsequent repression of transposons. Involved in the primary piRNA metabolic process. Specifically binds to piRNA precursors and promotes the generation of intermediate piRNA processing fragments that are subsequently loaded to Piwi proteins. Acts via its ATP-dependent RNA helicase activity: displays 5'-3' RNA unwinding activity and probably mediates unwinding and funneling of single-stranded piRNA precursor transcripts to the endonuclease that catalyzes the first cleavage step of piRNA processing to generate piRNA intermediate fragments that are subsequently loaded to Piwi proteins. The chain is RNA helicase Mov10l1 from Homo sapiens (Human).